Reading from the N-terminus, the 261-residue chain is Protein LIKE COV 2 (261 aa).

The disordered stretch occupies residues 1 to 38 (MAEGKEATTSSLSQGLTPHQDPDDAPKSPPNSPNSSTR). The Cytoplasmic portion of the chain corresponds to 1–56 (MAEGKEATTSSLSQGLTPHQDPDDAPKSPPNSPNSSTRKACYGVLQSWVSKKFMTG). A compositionally biased stretch (polar residues) spans 7-17 (ATTSSLSQGLT). Residues 57–77 (FVVLFPVAVTFLITWWFIQFV) form a helical membrane-spanning segment. At 78–91 (DGFFSPIYENLGVD) the chain is on the extracellular side. A helical transmembrane segment spans residues 92–112 (IFGLGFITSVLFTFFVGIFAS). Residues 113 to 261 (SWLGSTVFWL…HSLRVPLNRL (149 aa)) are Cytoplasmic-facing.

It belongs to the plant COV1 protein family.

It is found in the membrane. The sequence is that of Protein LIKE COV 2 from Arabidopsis thaliana (Mouse-ear cress).